The sequence spans 411 residues: Glycogen synthase kinase-3 homolog MsK-3 (411 aa).

Residues 74–358 enclose the Protein kinase domain; the sequence is YMAERVVGHG…ALEALVHPFY (285 aa). ATP is bound by residues 80–88 and lysine 103; that span reads VGHGSFGVV. Aspartate 199 functions as the Proton acceptor in the catalytic mechanism. Phosphotyrosine is present on tyrosine 234.

Belongs to the protein kinase superfamily. CMGC Ser/Thr protein kinase family. GSK-3 subfamily. In terms of tissue distribution, absent in leaves and petioles, very low levels are seen in the stems and roots while a moderate expression is seen in the nodes.

It catalyses the reaction L-seryl-[protein] + ATP = O-phospho-L-seryl-[protein] + ADP + H(+). The catalysed reaction is L-threonyl-[protein] + ATP = O-phospho-L-threonyl-[protein] + ADP + H(+). The sequence is that of Glycogen synthase kinase-3 homolog MsK-3 (MSK-3) from Medicago sativa (Alfalfa).